We begin with the raw amino-acid sequence, 316 residues long: Probable 5-dehydro-4-deoxyglucarate dehydratase 1 (316 aa).

It belongs to the DapA family.

It carries out the reaction 5-dehydro-4-deoxy-D-glucarate + H(+) = 2,5-dioxopentanoate + CO2 + H2O. Its pathway is carbohydrate acid metabolism; D-glucarate degradation; 2,5-dioxopentanoate from D-glucarate: step 2/2. This is Probable 5-dehydro-4-deoxyglucarate dehydratase 1 from Streptomyces coelicolor (strain ATCC BAA-471 / A3(2) / M145).